The chain runs to 62 residues: Large ribosomal subunit protein uL30 (62 aa).

Belongs to the universal ribosomal protein uL30 family. Part of the 50S ribosomal subunit.

This is Large ribosomal subunit protein uL30 from Dinoroseobacter shibae (strain DSM 16493 / NCIMB 14021 / DFL 12).